The primary structure comprises 390 residues: uncharacterized protein (390 aa).

It belongs to the peptidase M24 family.

This is an uncharacterized protein from Sinorhizobium fredii (strain NBRC 101917 / NGR234).